A 157-amino-acid polypeptide reads, in one-letter code: uncharacterized protein (157 aa).

The signal sequence occupies residues Met1 to Thr30.

It is found in the secreted. This is an uncharacterized protein from Homo sapiens (Human).